We begin with the raw amino-acid sequence, 291 residues long: ATP synthase gamma chain (291 aa).

This sequence belongs to the ATPase gamma chain family. F-type ATPases have 2 components, CF(1) - the catalytic core - and CF(0) - the membrane proton channel. CF(1) has five subunits: alpha(3), beta(3), gamma(1), delta(1), epsilon(1). CF(0) has three main subunits: a, b and c.

Its subcellular location is the cell membrane. Functionally, produces ATP from ADP in the presence of a proton gradient across the membrane. The gamma chain is believed to be important in regulating ATPase activity and the flow of protons through the CF(0) complex. This Streptococcus equi subsp. equi (strain 4047) protein is ATP synthase gamma chain.